A 106-amino-acid polypeptide reads, in one-letter code: Large ribosomal subunit protein uL24 (106 aa).

It belongs to the universal ribosomal protein uL24 family. Part of the 50S ribosomal subunit.

In terms of biological role, one of two assembly initiator proteins, it binds directly to the 5'-end of the 23S rRNA, where it nucleates assembly of the 50S subunit. Its function is as follows. One of the proteins that surrounds the polypeptide exit tunnel on the outside of the subunit. In Thermosipho melanesiensis (strain DSM 12029 / CIP 104789 / BI429), this protein is Large ribosomal subunit protein uL24.